A 228-amino-acid chain; its full sequence is 7-cyano-7-deazaguanine synthase (228 aa).

9–19 is an ATP binding site; the sequence is LSGGPDSTTVL. Residues Cys-193, Cys-203, Cys-206, and Cys-209 each contribute to the Zn(2+) site.

This sequence belongs to the QueC family. The cofactor is Zn(2+).

The catalysed reaction is 7-carboxy-7-deazaguanine + NH4(+) + ATP = 7-cyano-7-deazaguanine + ADP + phosphate + H2O + H(+). It participates in purine metabolism; 7-cyano-7-deazaguanine biosynthesis. In terms of biological role, catalyzes the ATP-dependent conversion of 7-carboxy-7-deazaguanine (CDG) to 7-cyano-7-deazaguanine (preQ(0)). The chain is 7-cyano-7-deazaguanine synthase from Rickettsia africae (strain ESF-5).